Reading from the N-terminus, the 520-residue chain is MENIEKLLMQEKILMLELDLVRAKISLARANGSSQQGDLPLHRETPVKEEAVHSALATFTPSQVKAIPEQTAPGKESTNPLMASILPKDMNPVQTGMRLTVPGDFLRPHQGIPIPRKSELSSTVAPLRAESGIQHPHINYYVVYNGPHAGIYDDWGCTKAATNGVPGVAHKKFATITEARAAADAYTTSQQTDRLNFIPKGEAQLKPKSFAKALTSPPKQKAHWLTLGTKKPSSDPAPKEISFDPEITMDDFLYLYDLVRKFDGEGDDTMFTTDNEKISLFNFRKNANPQMVREAYAAGLIKTIYPSNNLQEIKYLPKKVKDAVKRFRTNCIKNTEKDIFLKIRSTIPVWTIQGLLHKPRQVIEIGVSKKLVPTESKAMESKIQIEDLTELAVKTGEQFIQSLLRLNDKKKIFVNMVEHDTLIYSKNIKETVSEDQRAIETFQQRVISGNLLGFHCPAICHFIVKIVEKEGGTYQCHHCDKGKAIVKDASADSGPKDGPPPTRSIVEKEDVPTTSSKQVD.

The disordered stretch occupies residues 487–520; it reads KDASADSGPKDGPPPTRSIVEKEDVPTTSSKQVD.

Belongs to the caulimoviridae viroplasmin family.

It localises to the host cytoplasm. Enhances the ribosomal termination-reinitiation event leading to the translation of major open reading frames on the polycistronic viral RNAs. The sequence is that of Transactivator/viroplasmin protein from Arabidopsis thaliana (Mouse-ear cress).